Consider the following 232-residue polypeptide: Nuclear transcription factor Y subunit nfyc-1 (232 aa).

Residues 191–232 (TVPTTSTNGPGHMSEDSFQDPNMHSDFHQRTSNSSVNRSHHN) are disordered. The span at 220 to 232 (RTSNSSVNRSHHN) shows a compositional bias: polar residues.

It belongs to the NFYC/HAP5 subunit family. Forms two NF-Y heterotrimeric transcription factor complexes: the nfya-1-NF-Y complex is composed of nfya-1, nfyb-1 and nfyc-1, and the nfya-2-NF-Y complex is composed of nfya-2, nfyb-1 and nfyc-1. Interacts with nfyb-1; the interaction is direct and is required for the interaction with either nfya-1 or nfya-2, and subsequent binding of the complex to the 5'-CCAAT-3' box motif in DNA. In terms of tissue distribution, expressed in certain parts of the gonads with high expression in fertilized oocytes in the uterus and mature oocytes from the distal to the proximal arm of the gonad, but weak expression in the syncytial ovaries and immature oocytes at the beginning of the proximal arm of the gonad. Expressed in the excretory cell, secretory cells in the pharyngeal terminal bulb wall, in the small ganglia surrounding the pharynx and in the neurons running anteriorly to the sensory organs in the head. Not expressed in the intestine, the hypodermis or body wall muscle surrounding the pseudocoelomic space.

The protein localises to the nucleus. The protein resides in the cytoplasm. Its subcellular location is the perikaryon. Component of sequence-specific heterotrimeric transcription factor (nfya-1-NF-Y and nfya-2-NF-Y) complexes which specifically recognize a 5'-CCAAT-3' box motif found in the promoters of its target genes to regulate their expression and control cellular identity in particular tissue types. In association with the components in the NF-Y complexes, represses the expression of the T-box transcription factor tbx-2 throughout larval development, which most likely restricts its expression to certain tissues. May act to repress txb-2 expression in conjunction with tbx-2 itself, which has an autoregulatory role. In association with the components in the nfya-1-NF-Y complex, negatively regulates the expression of the homeobox protein egl-5 to spatially restrict its expression in tissues such as the head. May regulate egl-5 expression in association with the mes-2-mes-3-mes-6 complex. The polypeptide is Nuclear transcription factor Y subunit nfyc-1 (Caenorhabditis elegans).